Here is a 212-residue protein sequence, read N- to C-terminus: Tubulin alpha chain (212 aa).

GTP contacts are provided by Asn-3 and Asn-25. Residue Glu-51 is part of the active site.

This sequence belongs to the tubulin family. In terms of assembly, dimer of alpha and beta chains. A typical microtubule is a hollow water-filled tube with an outer diameter of 25 nm and an inner diameter of 15 nM. Alpha-beta heterodimers associate head-to-tail to form protofilaments running lengthwise along the microtubule wall with the beta-tubulin subunit facing the microtubule plus end conferring a structural polarity. Microtubules usually have 13 protofilaments but different protofilament numbers can be found in some organisms and specialized cells. It depends on Mg(2+) as a cofactor.

The protein resides in the cytoplasm. Its subcellular location is the cytoskeleton. It catalyses the reaction GTP + H2O = GDP + phosphate + H(+). Functionally, tubulin is the major constituent of microtubules, a cylinder consisting of laterally associated linear protofilaments composed of alpha- and beta-tubulin heterodimers. Microtubules grow by the addition of GTP-tubulin dimers to the microtubule end, where a stabilizing cap forms. Below the cap, tubulin dimers are in GDP-bound state, owing to GTPase activity of alpha-tubulin. The chain is Tubulin alpha chain (TUB-A) from Pneumocystis carinii.